The chain runs to 228 residues: MSVYSLPPAPPTDEHQLFQRAEALSGFTLGELASKAGWNIPADLKRIKGWVGMLLEFYLGASAGSKPEQDFADIGIELKTIPISAQGKPLETTFVCVAPLTGNSGITWESSHVRHKLARVLWVPVEGERQIPLAQRRVGAPLLWSPNEEEEELLRRDWEELMDLIVLGKVETITARHGEVLQLRPKAANSRALTEAIGEHGQPIMTLPRGFYLKKTFTGPMLARHFLL.

The protein belongs to the MutH family.

The protein resides in the cytoplasm. In terms of biological role, sequence-specific endonuclease that cleaves unmethylated GATC sequences. It is involved in DNA mismatch repair. The chain is DNA mismatch repair protein MutH from Yersinia enterocolitica serotype O:8 / biotype 1B (strain NCTC 13174 / 8081).